A 320-amino-acid chain; its full sequence is Ferrochelatase (320 aa).

His194 and Glu275 together coordinate Fe cation.

This sequence belongs to the ferrochelatase family. Monomer.

The protein resides in the cytoplasm. It catalyses the reaction heme b + 2 H(+) = protoporphyrin IX + Fe(2+). The protein operates within porphyrin-containing compound metabolism; protoheme biosynthesis; protoheme from protoporphyrin-IX: step 1/1. Its function is as follows. Catalyzes the ferrous insertion into protoporphyrin IX. This is Ferrochelatase from Salmonella agona (strain SL483).